A 644-amino-acid polypeptide reads, in one-letter code: Exoribonuclease 2 (644 aa).

Residues 189-516 form the RNB domain; it reads REDLTALNFV…NHRLLKAMIT (328 aa). The S1 motif domain maps to 561–643; that stretch reads DTRFTAEIID…ETRNVIARPV (83 aa).

The protein belongs to the RNR ribonuclease family. RNase II subfamily.

It localises to the cytoplasm. The catalysed reaction is Exonucleolytic cleavage in the 3'- to 5'-direction to yield nucleoside 5'-phosphates.. Involved in mRNA degradation. Hydrolyzes single-stranded polyribonucleotides processively in the 3' to 5' direction. The protein is Exoribonuclease 2 of Yersinia pseudotuberculosis serotype IB (strain PB1/+).